The chain runs to 308 residues: Ribosomal RNA small subunit methyltransferase H (308 aa).

S-adenosyl-L-methionine contacts are provided by residues 33 to 35 (GGH), Asp52, Tyr81, Asp99, and Gln106.

The protein belongs to the methyltransferase superfamily. RsmH family.

The protein localises to the cytoplasm. The enzyme catalyses cytidine(1402) in 16S rRNA + S-adenosyl-L-methionine = N(4)-methylcytidine(1402) in 16S rRNA + S-adenosyl-L-homocysteine + H(+). In terms of biological role, specifically methylates the N4 position of cytidine in position 1402 (C1402) of 16S rRNA. This Francisella philomiragia subsp. philomiragia (strain ATCC 25017 / CCUG 19701 / FSC 153 / O#319-036) protein is Ribosomal RNA small subunit methyltransferase H.